The chain runs to 238 residues: Flagellar L-ring protein (238 aa).

Positions 1–23 (MVKLFSYKIKYYLTAFFIIIIQS) are cleaved as a signal peptide. C24 carries the N-palmitoyl cysteine lipid modification. C24 carries S-diacylglycerol cysteine lipidation.

The protein belongs to the FlgH family. In terms of assembly, the basal body constitutes a major portion of the flagellar organelle and consists of four rings (L,P,S, and M) mounted on a central rod.

The protein localises to the cell outer membrane. It is found in the bacterial flagellum basal body. In terms of biological role, assembles around the rod to form the L-ring and probably protects the motor/basal body from shearing forces during rotation. The sequence is that of Flagellar L-ring protein from Buchnera aphidicola subsp. Schizaphis graminum (strain Sg).